A 309-amino-acid polypeptide reads, in one-letter code: Porphobilinogen deaminase (309 aa).

Cysteine 242 is subject to S-(dipyrrolylmethanemethyl)cysteine.

It belongs to the HMBS family. As to quaternary structure, monomer. Dipyrromethane serves as cofactor.

It catalyses the reaction 4 porphobilinogen + H2O = hydroxymethylbilane + 4 NH4(+). Its pathway is porphyrin-containing compound metabolism; protoporphyrin-IX biosynthesis; coproporphyrinogen-III from 5-aminolevulinate: step 2/4. In terms of biological role, tetrapolymerization of the monopyrrole PBG into the hydroxymethylbilane pre-uroporphyrinogen in several discrete steps. The chain is Porphobilinogen deaminase from Legionella pneumophila (strain Lens).